The sequence spans 298 residues: Type II methyltransferase M.MjaIV (298 aa).

The catalysed reaction is a 2'-deoxyadenosine in DNA + S-adenosyl-L-methionine = an N(6)-methyl-2'-deoxyadenosine in DNA + S-adenosyl-L-homocysteine + H(+). Its function is as follows. A methylase that recognizes the double-stranded sequence 5'-GTNNAC-3', methylates A-5 on both strands, and protects the DNA from cleavage by the MjaIV endonuclease. The polypeptide is Type II methyltransferase M.MjaIV (mjaIVMP) (Methanocaldococcus jannaschii (strain ATCC 43067 / DSM 2661 / JAL-1 / JCM 10045 / NBRC 100440) (Methanococcus jannaschii)).